We begin with the raw amino-acid sequence, 120 residues long: NAD(P)H-quinone oxidoreductase subunit 3, chloroplastic (120 aa).

Transmembrane regions (helical) follow at residues 9–29 (FFWAFLIISILVPILAFFISG), 64–84 (MFALVFVVFDVETVFLYPWAM), and 88–108 (VLGVSVFIEAFIFVLILIIGL).

This sequence belongs to the complex I subunit 3 family. NDH is composed of at least 16 different subunits, 5 of which are encoded in the nucleus.

Its subcellular location is the plastid. It is found in the chloroplast thylakoid membrane. The enzyme catalyses a plastoquinone + NADH + (n+1) H(+)(in) = a plastoquinol + NAD(+) + n H(+)(out). The catalysed reaction is a plastoquinone + NADPH + (n+1) H(+)(in) = a plastoquinol + NADP(+) + n H(+)(out). In terms of biological role, NDH shuttles electrons from NAD(P)H:plastoquinone, via FMN and iron-sulfur (Fe-S) centers, to quinones in the photosynthetic chain and possibly in a chloroplast respiratory chain. The immediate electron acceptor for the enzyme in this species is believed to be plastoquinone. Couples the redox reaction to proton translocation, and thus conserves the redox energy in a proton gradient. The protein is NAD(P)H-quinone oxidoreductase subunit 3, chloroplastic of Atropa belladonna (Belladonna).